Consider the following 257-residue polypeptide: Type III pantothenate kinase (257 aa).

6–13 is a binding site for ATP; the sequence is DCGNTNTV. A substrate-binding site is contributed by 107-110; that stretch reads GPDR. Aspartate 109 (proton acceptor) is an active-site residue. Aspartate 129 contacts K(+). ATP is bound at residue threonine 132. Threonine 184 provides a ligand contact to substrate.

The protein belongs to the type III pantothenate kinase family. Homodimer. Requires NH4(+) as cofactor. K(+) serves as cofactor.

The protein resides in the cytoplasm. The catalysed reaction is (R)-pantothenate + ATP = (R)-4'-phosphopantothenate + ADP + H(+). The protein operates within cofactor biosynthesis; coenzyme A biosynthesis; CoA from (R)-pantothenate: step 1/5. Its function is as follows. Catalyzes the phosphorylation of pantothenate (Pan), the first step in CoA biosynthesis. This Roseobacter denitrificans (strain ATCC 33942 / OCh 114) (Erythrobacter sp. (strain OCh 114)) protein is Type III pantothenate kinase.